Consider the following 114-residue polypeptide: T cell receptor alpha variable 12-3 (114 aa).

The first 21 residues, 1 to 21 (MMKSLRVLLVILWLQLSWVWS), serve as a signal peptide directing secretion. The Ig-like domain maps to 24–114 (KEVEQDPGPL…DSATYLCAMS (91 aa)). The N-linked (GlcNAc...) asparagine glycan is linked to Asn-44. A disulfide bridge connects residues Cys-45 and Cys-111.

Alpha-beta TR is a heterodimer composed of an alpha and beta chain; disulfide-linked. The alpha-beta TR is associated with the transmembrane signaling CD3 coreceptor proteins to form the TR-CD3 (TcR or TCR). The assembly of alpha-beta TR heterodimers with CD3 occurs in the endoplasmic reticulum where a single alpha-beta TR heterodimer associates with one CD3D-CD3E heterodimer, one CD3G-CD3E heterodimer and one CD247 homodimer forming a stable octameric structure. CD3D-CD3E and CD3G-CD3E heterodimers preferentially associate with TR alpha and TR beta chains, respectively. The association of the CD247 homodimer is the last step of TcR assembly in the endoplasmic reticulum and is required for transport to the cell surface.

The protein localises to the cell membrane. In terms of biological role, v region of the variable domain of T cell receptor (TR) alpha chain that participates in the antigen recognition. Alpha-beta T cell receptors are antigen specific receptors which are essential to the immune response and are present on the cell surface of T lymphocytes. Recognize peptide-major histocompatibility (MH) (pMH) complexes that are displayed by antigen presenting cells (APC), a prerequisite for efficient T cell adaptive immunity against pathogens. Binding of alpha-beta TR to pMH complex initiates TR-CD3 clustering on the cell surface and intracellular activation of LCK that phosphorylates the ITAM motifs of CD3G, CD3D, CD3E and CD247 enabling the recruitment of ZAP70. In turn ZAP70 phosphorylates LAT, which recruits numerous signaling molecules to form the LAT signalosome. The LAT signalosome propagates signal branching to three major signaling pathways, the calcium, the mitogen-activated protein kinase (MAPK) kinase and the nuclear factor NF-kappa-B (NF-kB) pathways, leading to the mobilization of transcription factors that are critical for gene expression and essential for T cell growth and differentiation. The T cell repertoire is generated in the thymus, by V-(D)-J rearrangement. This repertoire is then shaped by intrathymic selection events to generate a peripheral T cell pool of self-MH restricted, non-autoaggressive T cells. Post-thymic interaction of alpha-beta TR with the pMH complexes shapes TR structural and functional avidity. This is T cell receptor alpha variable 12-3 from Homo sapiens (Human).